The following is a 603-amino-acid chain: uncharacterized protein (603 aa).

The Ubiquitin-like domain maps to 4-79; sequence YRIRVTTVDQ…VTFHLVIAVF (76 aa). Disordered regions lie at residues 85–121, 159–178, and 206–348; these read TLPS…PEEL, SLPT…NSVS, and AQES…NQPF. 2 stretches are compositionally biased toward polar residues: residues 94 to 117 and 162 to 178; these read VPQS…TSLN and THEQ…NSVS. A compositionally biased stretch (low complexity) spans 219–231; sequence SSSSAPLASDQSP. Residues 246–264 are compositionally biased toward polar residues; that stretch reads LGSNSGLNPRSPNSFSSPL. The segment covering 280–289 has biased composition (low complexity); the sequence is SLSPLSNSSS. A compositionally biased stretch (polar residues) spans 290–314; that stretch reads INQVHQNETHGSTISVPNPNLSQMG. A compositionally biased stretch (low complexity) spans 315-329; sequence PSHSSSVPSNLSPNP. Polar residues predominate over residues 330–348; sequence AQNENPSTTSIPSINNQPF. Residues 496-516 form a helical membrane-spanning segment; it reads ILLTSIMSVVFLLQTGALAPF. A disordered region spans residues 544–578; the sequence is TAQRVVEIPNETQTEDEQDGTNTPDNRADAEEREL. Threonine 566 carries the phosphothreonine modification. The segment covering 569-578 has biased composition (basic and acidic residues); sequence NRADAEEREL.

It localises to the endoplasmic reticulum membrane. This is an uncharacterized protein from Schizosaccharomyces pombe (strain 972 / ATCC 24843) (Fission yeast).